Here is a 72-residue protein sequence, read N- to C-terminus: Phaiodotoxin-3 (72 aa).

Residues 1 to 72 (KFIRHKDESF…CFGALESKCA (72 aa)) form the LCN-type CS-alpha/beta domain. 4 disulfide bridges follow: cysteine 13-cysteine 38, cysteine 23-cysteine 50, cysteine 27-cysteine 52, and cysteine 63-cysteine 71.

Belongs to the long (4 C-C) scorpion toxin superfamily. Sodium channel inhibitor family. As to expression, expressed by the venom gland.

The protein resides in the secreted. In terms of biological role, sodium channel (Nav) specific neurotoxin. The protein is Phaiodotoxin-3 of Anuroctonus phaiodactylus (Mafia scorpion).